The primary structure comprises 254 residues: UPF0246 protein CPF_2407 (254 aa).

The protein belongs to the UPF0246 family.

The protein is UPF0246 protein CPF_2407 of Clostridium perfringens (strain ATCC 13124 / DSM 756 / JCM 1290 / NCIMB 6125 / NCTC 8237 / Type A).